A 985-amino-acid chain; its full sequence is Disease resistance protein At4g27190 (985 aa).

A coiled-coil region spans residues Ala-24 to Glu-88. One can recognise an NB-ARC domain in the interval Ile-167–Gly-429. ATP is bound at residue Gly-171–Thr-178. 6 LRR repeats span residues Ser-502 to Phe-523, Lys-526 to Gln-547, Thr-551 to Arg-572, Ser-575 to Ala-597, Lys-598 to Lys-620, and Arg-621 to Arg-643.

Belongs to the disease resistance NB-LRR family.

Disease resistance protein. The chain is Disease resistance protein At4g27190 from Arabidopsis thaliana (Mouse-ear cress).